A 159-amino-acid chain; its full sequence is 2-C-methyl-D-erythritol 2,4-cyclodiphosphate synthase (159 aa).

Residues Asp8 and His10 each contribute to the a divalent metal cation site. Residues 8-10 (DVH) and 34-35 (HS) contribute to the 4-CDP-2-C-methyl-D-erythritol 2-phosphate site. His42 lines the a divalent metal cation pocket. 4-CDP-2-C-methyl-D-erythritol 2-phosphate-binding positions include 56 to 58 (DIG), 61 to 65 (FPDTD), 100 to 106 (AQAPKMA), 132 to 135 (TTSE), Phe139, and Arg142.

The protein belongs to the IspF family. As to quaternary structure, homotrimer. The cofactor is a divalent metal cation.

It carries out the reaction 4-CDP-2-C-methyl-D-erythritol 2-phosphate = 2-C-methyl-D-erythritol 2,4-cyclic diphosphate + CMP. Its pathway is isoprenoid biosynthesis; isopentenyl diphosphate biosynthesis via DXP pathway; isopentenyl diphosphate from 1-deoxy-D-xylulose 5-phosphate: step 4/6. Its function is as follows. Involved in the biosynthesis of isopentenyl diphosphate (IPP) and dimethylallyl diphosphate (DMAPP), two major building blocks of isoprenoid compounds. Catalyzes the conversion of 4-diphosphocytidyl-2-C-methyl-D-erythritol 2-phosphate (CDP-ME2P) to 2-C-methyl-D-erythritol 2,4-cyclodiphosphate (ME-CPP) with a corresponding release of cytidine 5-monophosphate (CMP). The chain is 2-C-methyl-D-erythritol 2,4-cyclodiphosphate synthase from Aliivibrio salmonicida (strain LFI1238) (Vibrio salmonicida (strain LFI1238)).